The sequence spans 65 residues: Large ribosomal subunit protein bL35 (65 aa).

Basic residues-rich tracts occupy residues 1–18, 31–44, and 55–65; these read MPKM…KRTA, HRFH…RRQL, and VKRYKKMIPAK. A disordered region spans residues 1–65; that stretch reads MPKMKTKSAA…KRYKKMIPAK (65 aa).

The protein belongs to the bacterial ribosomal protein bL35 family.

The sequence is that of Large ribosomal subunit protein bL35 from Limosilactobacillus fermentum (strain NBRC 3956 / LMG 18251) (Lactobacillus fermentum).